The sequence spans 485 residues: Adenosylhomocysteinase (485 aa).

Substrate-binding residues include threonine 64, aspartate 139, and glutamate 205. 206–208 (TTT) is an NAD(+) binding site. Lysine 235 and aspartate 239 together coordinate substrate. Residues asparagine 240, 269 to 274 (GYGDVG), glutamate 292, asparagine 327, 348 to 350 (IGH), and asparagine 397 contribute to the NAD(+) site.

The protein belongs to the adenosylhomocysteinase family. It depends on NAD(+) as a cofactor.

The catalysed reaction is S-adenosyl-L-homocysteine + H2O = L-homocysteine + adenosine. Its pathway is amino-acid biosynthesis; L-homocysteine biosynthesis; L-homocysteine from S-adenosyl-L-homocysteine: step 1/1. In terms of biological role, adenosylhomocysteine is a competitive inhibitor of S-adenosyl-L-methionine-dependent methyl transferase reactions; therefore adenosylhomocysteinase may play a key role in the control of methylations via regulation of the intracellular concentration of adenosylhomocysteine. This chain is Adenosylhomocysteinase (SAHH), found in Lupinus luteus (European yellow lupine).